The sequence spans 546 residues: Crossover junction endonuclease EME1A (546 aa).

2 disordered regions span residues 1-55 (MSDF…FLDE) and 88-232 (VISL…REKQ). Over residues 28–49 (PTDLNLDTEPSLQKQPPGSAST) the composition is skewed to polar residues. 2 stretches are compositionally biased toward basic and acidic residues: residues 103–120 (SSKK…KPCR) and 149–167 (DAIE…VEKM). The segment covering 173–183 (TITSKSTSLSA) has biased composition (polar residues). A coiled-coil region spans residues 188–245 (KKKMSKDEKTRAAEEKKLQKEQEKLQKAASKAEDAEHKKLEREKQKWAKEKDKALKCI). Positions 192–232 (SKDEKTRAAEEKKLQKEQEKLQKAASKAEDAEHKKLEREKQ) are enriched in basic and acidic residues. Residues 278–478 (NPIQRSIVWT…PSLKSLLKVY (201 aa)) enclose the ERCC4 domain.

It belongs to the EME1/MMS4 family. Forms a heterodimer with MUS81. The cofactor is Mg(2+). Requires Ca(2+) as cofactor.

It is found in the nucleus. In terms of biological role, interacts with MUS81 to form a DNA structure-specific endonuclease with substrate preference for branched DNA structures with a 5'-end at the branch nick. Typical substrates include 3'-flap structures, D-loops, replication forks, nicked Holliday junctions and also intact Holliday junctions with a reduced efficiency. May be required in mitosis for the processing of stalled or collapsed replication fork intermediates. Plays a role in DNA repair and in genotoxic stress-induced homologous recombination (HR) in somatic cells. Mediates a subset of meiotic recombination events that are insensitive to crossover interference. In Arabidopsis thaliana (Mouse-ear cress), this protein is Crossover junction endonuclease EME1A (EME1A).